Reading from the N-terminus, the 635-residue chain is Membrane protein insertase YidC (635 aa).

A helical membrane pass occupies residues 8-28 (LILAMVLSALVMLVWSIFFAP). The tract at residues 33–61 (PAQDTPAASTQGTAQPEAGGPATPGAVPQ) is disordered. A run of 4 helical transmembrane segments spans residues 396–416 (MIGNMGWAIIALTFVLKLLVF), 470–490 (LPVLLQIPIFFALYKVIFVTI), 528–548 (SFLHSFTLPVLAILLGVSMWM), and 564–584 (IFAWMPWVFMFMLGGFASGLV). The interval 615–635 (IRSSLPSRAKAGDKGGDKGGK) is disordered. A compositionally biased stretch (basic and acidic residues) spans 624-635 (KAGDKGGDKGGK).

The protein belongs to the OXA1/ALB3/YidC family. Type 1 subfamily. Interacts with the Sec translocase complex via SecD. Specifically interacts with transmembrane segments of nascent integral membrane proteins during membrane integration.

It localises to the cell inner membrane. Required for the insertion and/or proper folding and/or complex formation of integral membrane proteins into the membrane. Involved in integration of membrane proteins that insert both dependently and independently of the Sec translocase complex, as well as at least some lipoproteins. Aids folding of multispanning membrane proteins. This Paracoccus denitrificans (strain Pd 1222) protein is Membrane protein insertase YidC.